Here is a 135-residue protein sequence, read N- to C-terminus: Cytochrome c2 (135 aa).

An N-terminal signal peptide occupies residues 1–23; sequence MKKGFLAAGVFAAVAFASGAALA. Residues cysteine 37, cysteine 40, histidine 41, and methionine 114 each contribute to the heme c site.

The protein belongs to the cytochrome c family. Post-translationally, binds 1 heme c group covalently per subunit.

Its function is as follows. Cytochrome c2 is found mainly in purple, non-sulfur, photosynthetic bacteria where it functions as the electron donor to the oxidized bacteriochlorophyll in the photophosphorylation pathway. However, it may also have a role in the respiratory chain and is found in some non-photosynthetic bacteria. The sequence is that of Cytochrome c2 (cycA) from Rhodospirillum rubrum (strain ATCC 11170 / ATH 1.1.1 / DSM 467 / LMG 4362 / NCIMB 8255 / S1).